The following is a 110-amino-acid chain: Large ribosomal subunit protein uL22 (110 aa).

Belongs to the universal ribosomal protein uL22 family. In terms of assembly, part of the 50S ribosomal subunit.

Functionally, this protein binds specifically to 23S rRNA; its binding is stimulated by other ribosomal proteins, e.g. L4, L17, and L20. It is important during the early stages of 50S assembly. It makes multiple contacts with different domains of the 23S rRNA in the assembled 50S subunit and ribosome. In terms of biological role, the globular domain of the protein is located near the polypeptide exit tunnel on the outside of the subunit, while an extended beta-hairpin is found that lines the wall of the exit tunnel in the center of the 70S ribosome. The protein is Large ribosomal subunit protein uL22 of Geobacter metallireducens (strain ATCC 53774 / DSM 7210 / GS-15).